The following is a 153-amino-acid chain: uncharacterized protein (153 aa).

Residues methionine 1 to alanine 22 form the signal peptide. Cysteine 23 carries N-palmitoyl cysteine lipidation. Cysteine 23 carries the S-diacylglycerol cysteine lipid modification. The tract at residues aspartate 117–lysine 153 is disordered. Polar residues predominate over residues methionine 124–glycine 133.

It to E.coli YehR.

The protein localises to the cell membrane. This is an uncharacterized protein from Listeria monocytogenes serovar 1/2a (strain ATCC BAA-679 / EGD-e).